The chain runs to 1006 residues: Phosphatidylinositol 4,5-bisphosphate 5-phosphatase A (1006 aa).

Positions 1–416 are disordered; that stretch reads MEGQSSRGSR…SSSPWSAQPT (416 aa). Residues 27 to 41 show a composition bias toward polar residues; that stretch reads VAQTGAPSKVDSSFQ. At arginine 56 the chain carries Asymmetric dimethylarginine; alternate. At arginine 56 the chain carries Omega-N-methylarginine; alternate. Arginine 65 is modified (omega-N-methylarginine). An Asymmetric dimethylarginine modification is found at arginine 76. Arginine 83 is subject to Asymmetric dimethylarginine; alternate. Arginine 83 carries the omega-N-methylarginine; alternate modification. The span at 94–112 shows a compositional bias: polar residues; sequence GQKTATAHRSSSLAPTSVG. Positions 102–107 match the RSXSXX motif 1 motif; sequence RSSSLA. The segment covering 180 to 193 has biased composition (low complexity); that stretch reads LAASGLSLALASEE. The segment covering 196-209 has biased composition (pro residues); that stretch reads PELPSTPSPVPSPV. The segment covering 210–234 has biased composition (low complexity); the sequence is LSPTQEQALAPASTASGAASVGQTS. Polar residues predominate over residues 256 to 273; that stretch reads PAQTSGPTGSPPCIQTSP. A phosphoserine mark is found at serine 291 and serine 324. Pro residues predominate over residues 337–347; it reads VPPPLPKPPRS. Residues 345–350 carry the SH3-binding motif; the sequence is PRSPSR. 2 stretches are compositionally biased toward low complexity: residues 348–360 and 398–409; these read PSRS…NRSP and TTSSSTSTLSSS. The RSXSXX motif 2 motif lies at 350–355; the sequence is RSPSHS. The catalytic stretch occupies residues 425–728; sequence ITVVTWNVGT…SDHKPVAAQF (304 aa). The segment at 729 to 840 is required for ruffle localization; it reads LLQFAFRDDM…IGITEPFQIS (112 aa). Residues 844–858 show a composition bias toward low complexity; the sequence is SELASSSTDSSGTSS. A disordered region spans residues 844-1006; that stretch reads SELASSSTDS…RGLEEGGLGP (163 aa). 2 consecutive short sequence motifs (RSXSXX motif) follow at residues 874 to 879 and 885 to 890; these read RSPSPG and RSRSPG. Serine 903 bears the Phosphoserine mark. The RSXSXX motif 5 motif lies at 911–916; that stretch reads RSPSPQ. Positions 927–946 are enriched in low complexity; the sequence is RSSNGSSRGSSEEGPSGLPG. Serine 990 bears the Phosphoserine mark.

It belongs to the inositol 1,4,5-trisphosphate 5-phosphatase type II family.

It is found in the cytoplasm. The enzyme catalyses 1D-myo-inositol 1,4,5-trisphosphate + H2O = 1D-myo-inositol 1,4-bisphosphate + phosphate. It catalyses the reaction 1D-myo-inositol 1,3,4,5-tetrakisphosphate + H2O = 1D-myo-inositol 1,3,4-trisphosphate + phosphate. It carries out the reaction a 1,2-diacyl-sn-glycero-3-phospho-(1D-myo-inositol-4,5-bisphosphate) + H2O = a 1,2-diacyl-sn-glycero-3-phospho-(1D-myo-inositol 4-phosphate) + phosphate. Functionally, inositol 5-phosphatase, which converts inositol 1,4,5-trisphosphate to inositol 1,4-bisphosphate. Also converts phosphatidylinositol 4,5-bisphosphate to phosphatidylinositol 4-phosphate and inositol 1,3,4,5-tetrakisphosphate to inositol 1,3,4-trisphosphate in vitro. May be involved in modulation of the function of inositol and phosphatidylinositol polyphosphate-binding proteins that are present at membranes ruffles. The protein is Phosphatidylinositol 4,5-bisphosphate 5-phosphatase A (INPP5J) of Homo sapiens (Human).